We begin with the raw amino-acid sequence, 333 residues long: Prenyltransferase stbC (333 aa).

The next 8 membrane-spanning stretches (helical) occupy residues 74-94, 125-145, 147-164, 173-193, 201-221, 247-267, 272-292, and 304-324; these read VAFQAVLYIGWTFFMRGAGCA, ANIFGFAMVALAFACISPLPA, CQRLGLMTTVLSIIYPFC, VILGMTLAINFILAAYGAGLP, VPTICVTTAITLLVVFYDVVY, ILLTSITLVIAGLIATTGVLV, YFFVFSVAGLLAALLAMIGGI, and SGWFYALAIFNLLGGYLIEYL.

Belongs to the UbiA prenyltransferase family.

The protein resides in the membrane. It catalyses the reaction orsellinate + (2E,6E)-farnesyl diphosphate = ilicicolinate B + diphosphate. The protein operates within secondary metabolite biosynthesis; terpenoid biosynthesis. Prenyltransferase; part of the cluster that mediates the biosynthesis of LL-Z1272-beta, also known as ilicicolin B, a prenylated aryl-aldehyde produced by several fungi and that serves as a key pathway intermediate for many fungal meroterpenoids. The first step in the pathway is performed by the non-reducing polyketide synthase stbA that produces orsellinic acid by condensing acetyl-CoA with 3 malonyl-CoA units. The prenyltransferase stbC then prenylates orsenilic acid into grifolic acid. Finally, grifolic acid is reduced to ilicicolin B by the NRPS-like protein stbB. In Stachybotrys bisbyi (Hyalostachybotrys bisbyi), this protein is Prenyltransferase stbC.